The primary structure comprises 73 residues: Putative defensin-like protein 42 (73 aa).

4 disulfides stabilise this stretch: C6/C58, C18/C41, C27/C50, and C31/C52.

Belongs to the DEFL family.

This Arabidopsis thaliana (Mouse-ear cress) protein is Putative defensin-like protein 42.